The chain runs to 145 residues: Cell wall teichoic acid glycosylation protein GtcA (145 aa).

4 helical membrane-spanning segments follow: residues 21-41, 45-65, 91-111, and 122-142; these read IFMYLIMGGFTTIINIVTFWL, ILNWDYRIANTIAFIASVLFA, FFGFRCLTYIIDILVMILLIS, and IWTNIIVLVLNYVFSKWIIFK.

It belongs to the GtrA family.

It localises to the cell membrane. Involved in the decoration of cell wall teichoic acid with galactose and glucose. The chain is Cell wall teichoic acid glycosylation protein GtcA (gtcA) from Listeria monocytogenes.